Here is a 1934-residue protein sequence, read N- to C-terminus: Pyruvate dehydrogenase [NADP(+)] (1934 aa).

2 consecutive 4Fe-4S ferredoxin-type domains span residues 710 to 739 (SIPI…PFLL) and 767 to 796 (YRIQ…MEGL). [4Fe-4S] cluster-binding residues include Cys-719, Cys-722, Cys-725, Cys-729, Cys-776, Cys-779, Cys-782, and Cys-786. Residues 1288–1438 (MHVLYGTETG…ELIEWLPDYL (151 aa)) form the Flavodoxin-like domain. In terms of domain architecture, FAD-binding FR-type spans 1501-1759 (PNSVLLPVIE…NIKASAFNLP (259 aa)). FAD contacts are provided by residues 1542-1553 (YCLGDSLALYGQ) and 1685-1695 (IKSRSYSIASC).

It in the N-terminal section; belongs to the pyruvate:ferredoxin/flavodoxin oxidoreductase family. As to quaternary structure, homodimer. FAD serves as cofactor. FMN is required as a cofactor. Requires thiamine diphosphate as cofactor.

It catalyses the reaction pyruvate + NADP(+) + CoA = acetyl-CoA + CO2 + NADPH. In terms of biological role, may have an important role in respiratory metabolism. Cryptosporidium have a relic mitochondrion with no function in energy metabolism so it is not known if PFOR has a function. The polypeptide is Pyruvate dehydrogenase [NADP(+)] (PFOR) (Cryptosporidium parvum).